The sequence spans 122 residues: Large ribosomal subunit protein uL14 (122 aa).

This sequence belongs to the universal ribosomal protein uL14 family. As to quaternary structure, part of the 50S ribosomal subunit. Forms a cluster with proteins L3 and L19. In the 70S ribosome, L14 and L19 interact and together make contacts with the 16S rRNA in bridges B5 and B8.

Its function is as follows. Binds to 23S rRNA. Forms part of two intersubunit bridges in the 70S ribosome. The polypeptide is Large ribosomal subunit protein uL14 (Buchnera aphidicola subsp. Schizaphis graminum (strain Sg)).